Reading from the N-terminus, the 314-residue chain is Carbamate kinase (314 aa).

The protein belongs to the carbamate kinase family. Homodimer.

The protein resides in the cytoplasm. The enzyme catalyses hydrogencarbonate + NH4(+) + ATP = carbamoyl phosphate + ADP + H2O + H(+). It participates in metabolic intermediate metabolism; carbamoyl phosphate degradation; CO(2) and NH(3) from carbamoyl phosphate: step 1/1. The sequence is that of Carbamate kinase (arcC) from Clostridium perfringens (strain 13 / Type A).